The chain runs to 174 residues: NADH-ubiquinone oxidoreductase chain 6 (174 aa).

5 helical membrane-spanning segments follow: residues 1 to 21 (MTYV…GFSS), 24 to 44 (SPIY…GIVL), 46 to 66 (FGGS…MLVV), 86 to 106 (VMIL…VVYM), and 151 to 171 (WLMV…IEIT).

It belongs to the complex I subunit 6 family. In terms of assembly, core subunit of respiratory chain NADH dehydrogenase (Complex I) which is composed of 45 different subunits.

Its subcellular location is the mitochondrion inner membrane. The enzyme catalyses a ubiquinone + NADH + 5 H(+)(in) = a ubiquinol + NAD(+) + 4 H(+)(out). Its function is as follows. Core subunit of the mitochondrial membrane respiratory chain NADH dehydrogenase (Complex I) which catalyzes electron transfer from NADH through the respiratory chain, using ubiquinone as an electron acceptor. Essential for the catalytic activity and assembly of complex I. This Oryctolagus cuniculus (Rabbit) protein is NADH-ubiquinone oxidoreductase chain 6 (MT-ND6).